We begin with the raw amino-acid sequence, 97 residues long: Mapk-regulated corepressor-interacting protein 1 (97 aa).

Residues 1–30 (MTSSPVSRVVYNGKRNSSHRSPPNSSEIFT) form a disordered region. The residue at position 21 (S21) is a Phosphoserine. At T30 the chain carries Phosphothreonine. Y41 is modified (phosphotyrosine). The segment at 77 to 97 (TFRPIDLSDLKRRNTQDAKKS) is disordered. Positions 80–84 (PIDLS) match the PXDLS motif motif. Residues 82–97 (DLSDLKRRNTQDAKKS) are compositionally biased toward basic and acidic residues.

Belongs to the MCRIP family. In terms of assembly, interacts (unphosphorylated form, via the PXDLS motif) with CTBP1, competitively inhibiting CTBP-ZEB1 interaction. Interacts with CTBP2. Interacts with MCRIP2. Interacts with DDX6. Post-translationally, phosphorylation by MAPK3/1 (ERK1/2) regulates MCRIP1 binding to CTBP(s).

It is found in the nucleus. The protein localises to the cytoplasm. The protein resides in the stress granule. Functionally, the phosphorylation status of MCRIP1 functions as a molecular switch to regulate epithelial-mesenchymal transition. Unphosphorylated MCRIP1 binds to and inhibits the transcriptional corepressor CTBP(s). When phosphorylated by MAPK/ERK, MCRIP1 releases CTBP(s) resulting in transcriptional silencing of the E-cadherin gene and induction of epithelial-mesenchymal transition. This Bos taurus (Bovine) protein is Mapk-regulated corepressor-interacting protein 1 (MCRIP1).